The following is a 124-amino-acid chain: Large ribosomal subunit protein bL17 (124 aa).

This sequence belongs to the bacterial ribosomal protein bL17 family. In terms of assembly, part of the 50S ribosomal subunit. Contacts protein L32.

The protein is Large ribosomal subunit protein bL17 of Acidithiobacillus ferrooxidans (strain ATCC 23270 / DSM 14882 / CIP 104768 / NCIMB 8455) (Ferrobacillus ferrooxidans (strain ATCC 23270)).